The chain runs to 367 residues: 7,8-didemethyl-8-hydroxy-5-deazariboflavin synthase (367 aa).

Positions 39-275 constitute a Radical SAM core domain; that stretch reads LTFARNVFVP…AEVGVQVPPN (237 aa). The [4Fe-4S] cluster site is built by cysteine 53, cysteine 57, and cysteine 60.

Belongs to the radical SAM superfamily. CofG family. Consists of two subunits, CofG and CofH. It depends on [4Fe-4S] cluster as a cofactor.

The catalysed reaction is 5-amino-5-(4-hydroxybenzyl)-6-(D-ribitylimino)-5,6-dihydrouracil + S-adenosyl-L-methionine = 7,8-didemethyl-8-hydroxy-5-deazariboflavin + 5'-deoxyadenosine + L-methionine + NH4(+) + H(+). It participates in cofactor biosynthesis; coenzyme F0 biosynthesis. In terms of biological role, catalyzes the radical-mediated synthesis of 7,8-didemethyl-8-hydroxy-5-deazariboflavin from 5-amino-5-(4-hydroxybenzyl)-6-(D-ribitylimino)-5,6-dihydrouracil. The polypeptide is 7,8-didemethyl-8-hydroxy-5-deazariboflavin synthase (Halobacterium salinarum (strain ATCC 29341 / DSM 671 / R1)).